The sequence spans 257 residues: Tryptophan synthase alpha chain (257 aa).

Catalysis depends on proton acceptor residues Glu-51 and Asp-62.

This sequence belongs to the TrpA family. As to quaternary structure, tetramer of two alpha and two beta chains.

It carries out the reaction (1S,2R)-1-C-(indol-3-yl)glycerol 3-phosphate + L-serine = D-glyceraldehyde 3-phosphate + L-tryptophan + H2O. It participates in amino-acid biosynthesis; L-tryptophan biosynthesis; L-tryptophan from chorismate: step 5/5. Its function is as follows. The alpha subunit is responsible for the aldol cleavage of indoleglycerol phosphate to indole and glyceraldehyde 3-phosphate. The protein is Tryptophan synthase alpha chain of Nitratidesulfovibrio vulgaris (strain ATCC 29579 / DSM 644 / CCUG 34227 / NCIMB 8303 / VKM B-1760 / Hildenborough) (Desulfovibrio vulgaris).